The primary structure comprises 270 residues: MLPYPQIDPVAVAIGPLQIHWYGLMYLVGIGGAWLLASRRLNKFDPTWTKEKLSDLIFWLAMGVIVGGRLGYVLFYDLSAYIANPLLIFEVWKGGMAFHGGFVGVMIAAWWFGKRNGKSFFQLMDFVAPLVPIGLGAGRIGNFINAELWGKPTDVPWAMVFPPFSDPAQLARHPSQLYQFALEGVALFIILNLYARKPRPTMAVSGMFALFYGIFRFVVEFVRVPDAQLGYLAWGWVTMGQILSLPMIIAGLFLIWLAYKRDPAASKAAA.

A run of 7 helical transmembrane segments spans residues Val-10–Ile-30, Leu-56–Tyr-76, Trp-92–Phe-112, Phe-120–Ile-140, Ser-175–Ala-195, Met-202–Val-222, and Val-237–Leu-257. Arg-139 provides a ligand contact to a 1,2-diacyl-sn-glycero-3-phospho-(1'-sn-glycerol).

The protein belongs to the Lgt family.

Its subcellular location is the cell inner membrane. It catalyses the reaction L-cysteinyl-[prolipoprotein] + a 1,2-diacyl-sn-glycero-3-phospho-(1'-sn-glycerol) = an S-1,2-diacyl-sn-glyceryl-L-cysteinyl-[prolipoprotein] + sn-glycerol 1-phosphate + H(+). The protein operates within protein modification; lipoprotein biosynthesis (diacylglyceryl transfer). Functionally, catalyzes the transfer of the diacylglyceryl group from phosphatidylglycerol to the sulfhydryl group of the N-terminal cysteine of a prolipoprotein, the first step in the formation of mature lipoproteins. In Pseudomonas savastanoi pv. phaseolicola (strain 1448A / Race 6) (Pseudomonas syringae pv. phaseolicola (strain 1448A / Race 6)), this protein is Phosphatidylglycerol--prolipoprotein diacylglyceryl transferase.